Here is an 899-residue protein sequence, read N- to C-terminus: Valine--tRNA ligase (899 aa).

The 'HIGH' region motif lies at 58 to 68 (PNVTGVLHIGH). Positions 544–548 (KMSKS) match the 'KMSKS' region motif. An ATP-binding site is contributed by K547. Residues 836–898 (GTRLHNQRQK…NAELIALGLQ (63 aa)) adopt a coiled-coil conformation.

Belongs to the class-I aminoacyl-tRNA synthetase family. ValS type 1 subfamily. In terms of assembly, monomer.

Its subcellular location is the cytoplasm. The catalysed reaction is tRNA(Val) + L-valine + ATP = L-valyl-tRNA(Val) + AMP + diphosphate. Functionally, catalyzes the attachment of valine to tRNA(Val). As ValRS can inadvertently accommodate and process structurally similar amino acids such as threonine, to avoid such errors, it has a 'posttransfer' editing activity that hydrolyzes mischarged Thr-tRNA(Val) in a tRNA-dependent manner. The chain is Valine--tRNA ligase from Helicobacter hepaticus (strain ATCC 51449 / 3B1).